We begin with the raw amino-acid sequence, 326 residues long: Guanine nucleotide-binding protein subunit beta-like protein 1 (326 aa).

WD repeat units lie at residues 17 to 61 (GTQS…IVTT), 64 to 104 (GHGG…NTIM), 159 to 202 (ARPG…VCSQ), 205 to 244 (CHEE…SLQV), 250 to 291 (LTNP…AVLA), and 292 to 325 (FHSA…LYPC).

As to expression, expressed at low levels in most tissues and highly expressed in adult testis. Widely expressed in adult brain with striking regional distribution in forebrain, midbrain, and hindbrain structures, including the thalamus, hypothalamus, amygdala, hippocampus, pons.

The protein resides in the cytoplasm. It localises to the nucleus. Its function is as follows. Acts as a critical regulator of DNA damage response (DDR) signaling via specifically regulating phosphatidylinositol 3-kinase-related protein kinase (PIKK) family proteins. In Mus musculus (Mouse), this protein is Guanine nucleotide-binding protein subunit beta-like protein 1 (Gnb1l).